The primary structure comprises 95 residues: Putative pterin-4-alpha-carbinolamine dehydratase (95 aa).

The protein belongs to the pterin-4-alpha-carbinolamine dehydratase family.

The catalysed reaction is (4aS,6R)-4a-hydroxy-L-erythro-5,6,7,8-tetrahydrobiopterin = (6R)-L-erythro-6,7-dihydrobiopterin + H2O. This chain is Putative pterin-4-alpha-carbinolamine dehydratase, found in Solibacter usitatus (strain Ellin6076).